Here is a 739-residue protein sequence, read N- to C-terminus: NAD(P)H-quinone oxidoreductase subunit 5, chloroplastic (739 aa).

Helical transmembrane passes span 9–29 (WIIP…LLLV), 39–59 (IWAF…ADLA), 89–109 (IDPL…MVLI), 125–145 (FAYM…SNLI), 147–167 (IYIF…FWFT), 185–205 (GDFG…SFEF), 224–244 (LFAA…SAQF), 258–278 (TPIS…FLVA), 280–300 (LLPL…IGII), 327–347 (LGYI…FHLI), 354–374 (ALLF…VGYS), 396–416 (TTFF…CFWS), 425–445 (WLYS…TAFY), 544–564 (LFPM…GIPF), 603–623 (IYSV…YGSV), and 716–736 (ISSY…IYYF).

The protein belongs to the complex I subunit 5 family. NDH is composed of at least 16 different subunits, 5 of which are encoded in the nucleus.

The protein resides in the plastid. Its subcellular location is the chloroplast thylakoid membrane. The enzyme catalyses a plastoquinone + NADH + (n+1) H(+)(in) = a plastoquinol + NAD(+) + n H(+)(out). It carries out the reaction a plastoquinone + NADPH + (n+1) H(+)(in) = a plastoquinol + NADP(+) + n H(+)(out). NDH shuttles electrons from NAD(P)H:plastoquinone, via FMN and iron-sulfur (Fe-S) centers, to quinones in the photosynthetic chain and possibly in a chloroplast respiratory chain. The immediate electron acceptor for the enzyme in this species is believed to be plastoquinone. Couples the redox reaction to proton translocation, and thus conserves the redox energy in a proton gradient. This is NAD(P)H-quinone oxidoreductase subunit 5, chloroplastic (ndhF) from Acorus calamus (Sweet flag).